Consider the following 444-residue polypeptide: Tubulin beta chain (444 aa).

Residues glutamine 11, glutamate 69, serine 138, glycine 142, threonine 143, glycine 144, asparagine 204, and asparagine 226 each coordinate GTP. Glutamate 69 is a binding site for Mg(2+). A disordered region spans residues 423-444; the sequence is QQYQDATAEEEGEFDDEEEMDV. Positions 429–444 are enriched in acidic residues; that stretch reads TAEEEGEFDDEEEMDV.

This sequence belongs to the tubulin family. In terms of assembly, dimer of alpha and beta chains. A typical microtubule is a hollow water-filled tube with an outer diameter of 25 nm and an inner diameter of 15 nM. Alpha-beta heterodimers associate head-to-tail to form protofilaments running lengthwise along the microtubule wall with the beta-tubulin subunit facing the microtubule plus end conferring a structural polarity. Microtubules usually have 13 protofilaments but different protofilament numbers can be found in some organisms and specialized cells. It depends on Mg(2+) as a cofactor.

It localises to the cytoplasm. It is found in the cytoskeleton. Tubulin is the major constituent of microtubules, a cylinder consisting of laterally associated linear protofilaments composed of alpha- and beta-tubulin heterodimers. Microtubules grow by the addition of GTP-tubulin dimers to the microtubule end, where a stabilizing cap forms. Below the cap, tubulin dimers are in GDP-bound state, owing to GTPase activity of alpha-tubulin. The chain is Tubulin beta chain from Euplotes focardii.